Here is a 185-residue protein sequence, read N- to C-terminus: Meiotic expression up-regulated protein 31 (185 aa).

The sequence is that of Meiotic expression up-regulated protein 31 (meu31) from Schizosaccharomyces pombe (strain 972 / ATCC 24843) (Fission yeast).